Consider the following 89-residue polypeptide: Small ribosomal subunit protein uS15 (89 aa).

Basic and acidic residues predominate over residues Met1 to Glu10. The tract at residues Met1–Gly23 is disordered. A compositionally biased stretch (polar residues) spans Ala14–Gly23.

Belongs to the universal ribosomal protein uS15 family. Part of the 30S ribosomal subunit. Forms a bridge to the 50S subunit in the 70S ribosome, contacting the 23S rRNA.

Functionally, one of the primary rRNA binding proteins, it binds directly to 16S rRNA where it helps nucleate assembly of the platform of the 30S subunit by binding and bridging several RNA helices of the 16S rRNA. Forms an intersubunit bridge (bridge B4) with the 23S rRNA of the 50S subunit in the ribosome. The chain is Small ribosomal subunit protein uS15 from Synechococcus sp. (strain WH7803).